The primary structure comprises 415 residues: Protein PIN-LIKES 4 (415 aa).

Residues 1–13 lie on the Lumenal side of the membrane; that stretch reads MKLLELFIASSKP. The chain crosses the membrane as a helical span at residues 14–34; that stretch reads VVETLLITSVGFYLALDTVNL. The Cytoplasmic portion of the chain corresponds to 35 to 44; the sequence is LGHDARKHLN. A helical transmembrane segment spans residues 45 to 61; that stretch reads NIVFYVFSPSLIGSRLA. Residues 62 to 75 lie on the Lumenal side of the membrane; the sequence is DSVTYESLVKMWFM. A helical transmembrane segment spans residues 76-96; it reads PVNVLLTFMIGSLLGWIVIVI. The Cytoplasmic portion of the chain corresponds to 97 to 106; sequence TKPPSQLRGL. The chain crosses the membrane as a helical span at residues 107 to 127; it reads IISCCASGNLGTMPLIIIPAI. Over 128-143 the chain is Lumenal; the sequence is CKEKGGPFGDSESCEK. The helical transmembrane segment at 144-161 threads the bilayer; sequence YGMGYVTLSMTAFFISVY. Over 162 to 244 the chain is Cytoplasmic; the sequence is KHDTNWYVSG…RVVSLSKKVN (83 aa). Residues 245–265 traverse the membrane as a helical segment; the sequence is LGSIFAPATIAAIIALVIGLI. Over 266 to 285 the chain is Lumenal; the sequence is TPLRNLIIGTVAPFRVIQDS. The chain crosses the membrane as a helical span at residues 286–306; the sequence is LTLLGDGAIPAMTLILGGNLL. Over 307–322 the chain is Cytoplasmic; the sequence is KGMRRSEVRSSEMKNS. Residues 323 to 343 traverse the membrane as a helical segment; the sequence is CIIGVLVARYILLPVSGVLLV. The Lumenal segment spans residues 344–355; the sequence is RGAYKLDLVTSE. A helical transmembrane segment spans residues 356–376; sequence PLYQFVLLLQYAVPPAMNLGT. Residues 377–389 are Cytoplasmic-facing; the sequence is KTQLFGAGESECS. Residues 390 to 410 form a helical membrane-spanning segment; that stretch reads VIMLWTYSLAAVSLTVWPTFF. At 411 to 415 the chain is on the lumenal side; sequence MWLVT.

It belongs to the auxin efflux carrier (TC 2.A.69.2) family. Expressed in seedlings, rosette and cauline leaves, stems, flowers and siliques.

It localises to the endoplasmic reticulum membrane. Its function is as follows. Involved in cellular auxin homeostasis by regulating auxin metabolism. Regulates intracellular auxin accumulation at the endoplasmic reticulum and thus auxin availability for nuclear auxin signaling. This Arabidopsis thaliana (Mouse-ear cress) protein is Protein PIN-LIKES 4.